The sequence spans 248 residues: PACRG-like protein (248 aa).

At M1 the chain carries N-acetylmethionine. Residues 1 to 72 are disordered; sequence MQRSECSGGV…NPKTINPFGE (72 aa). Composition is skewed to polar residues over residues 14-29 and 36-45; these read NRAT…SSTQ and VQRSKSSSLT. A Phosphoserine modification is found at S47.

The polypeptide is PACRG-like protein (Pacrgl) (Mus musculus (Mouse)).